The sequence spans 62 residues: UPF0434 protein Rpic_2808 (62 aa).

This sequence belongs to the UPF0434 family.

This Ralstonia pickettii (strain 12J) protein is UPF0434 protein Rpic_2808.